The sequence spans 521 residues: Cytochrome P450 1A1 (521 aa).

Phe229 is a substrate binding site. Cys463 is a heme binding site.

Belongs to the cytochrome P450 family. The cofactor is heme.

Its subcellular location is the endoplasmic reticulum membrane. It localises to the microsome membrane. It catalyses the reaction an organic molecule + reduced [NADPH--hemoprotein reductase] + O2 = an alcohol + oxidized [NADPH--hemoprotein reductase] + H2O + H(+). Its function is as follows. Cytochromes P450 are a group of heme-thiolate monooxygenases. They oxidize a variety of structurally unrelated compounds, including steroids, fatty acids, and xenobiotics. This is Cytochrome P450 1A1 (cyp1a1) from Chelon saliens (Leaping mullet).